A 257-amino-acid chain; its full sequence is Diaminopimelate epimerase (257 aa).

N13, Q46, and N66 together coordinate substrate. C75 (proton donor) is an active-site residue. Substrate-binding positions include 76–77 (GN), N145, N175, and 193–194 (ER). The Proton acceptor role is filled by C202. Residue 203-204 (GS) coordinates substrate.

It belongs to the diaminopimelate epimerase family. In terms of assembly, homodimer.

It localises to the cytoplasm. It carries out the reaction (2S,6S)-2,6-diaminopimelate = meso-2,6-diaminopimelate. It functions in the pathway amino-acid biosynthesis; L-lysine biosynthesis via DAP pathway; DL-2,6-diaminopimelate from LL-2,6-diaminopimelate: step 1/1. Catalyzes the stereoinversion of LL-2,6-diaminopimelate (L,L-DAP) to meso-diaminopimelate (meso-DAP), a precursor of L-lysine and an essential component of the bacterial peptidoglycan. This chain is Diaminopimelate epimerase, found in Gluconobacter oxydans (strain 621H) (Gluconobacter suboxydans).